The sequence spans 396 residues: MAPVKQKKKNKKKPLDKAKKLAKNKEKKRVNAVPLDPEAIDCDWWDTFWLRNSSPSVPSDEDYAFKHFFRASKTTFSYICSLVREDLISRPPSGLINIEGRLLSVEKQVAIALRRLASGDSQVSVGAAFGVGQSTVSQVTWRFIEALEERAKHHLRWPDSDRIEEIKSKFEEMYGLPNCCGAIDTTHIIMTLPAVQASDDWCDQEKNYSMFLQGVFDHEMRFLNMVTGWPGGMTVSKLLKFSGFFKLCENAQILDGNPKTLSQGAQIREYVVGGISYPLLPWLITPHDSDHPSDSMVAFNERHEKVRSVAATAFQQLKGSWRILSKVMWRPDRRKLPSIILVCCLLHNIIIDCGDYLQEDVPLSGHHDSGYADRYCKQTEPLGSELRGCLTEHLLR.

Basic residues-rich tracts occupy residues 1 to 12 and 20 to 29; these read MAPVKQKKKNKK and KLAKNKEKKR. A disordered region spans residues 1 to 29; sequence MAPVKQKKKNKKKPLDKAKKLAKNKEKKR. The short motif at 6 to 13 is the Nuclear localization signal element; it reads QKKKNKKK. In terms of domain architecture, DDE Tnp4 spans 183 to 348; it reads IDTTHIIMTL…IILVCCLLHN (166 aa).

It belongs to the HARBI1 family. As to quaternary structure, interacts with core components of POLYCOMB REPRESSIVE COMPLEX 2 (PRC2), a PcG protein complex with H3K27me3 histone methyltransferase activity. Associates with plant-specific PRC2 accessory components such as MSI1, EMF2, VRN2, FIE and CLF. A divalent metal cation serves as cofactor. Expressed in roots, inflorescence stems, seedlings, leaves, flower buds, inflorescences, and siliques.

It localises to the nucleus. In terms of biological role, transposase-derived protein that may have nuclease activity. Antagonist of polycomb-group (PcG) protein-mediated chromatin silencing, probably by preventing the association of POLYCOMB REPRESSIVE COMPLEX 2 (PRC2) with its accessory components. Needed for full reactivation of several floral homeotic genes that are repressed by PcG. In Arabidopsis thaliana (Mouse-ear cress), this protein is Protein ANTAGONIST OF LIKE HETEROCHROMATIN PROTEIN 1.